The primary structure comprises 355 residues: Peptide chain release factor 1 (355 aa).

Gln231 carries the N5-methylglutamine modification. The segment at 283 to 303 (LAKESEARKSQVGSGDRSERI) is disordered.

The protein belongs to the prokaryotic/mitochondrial release factor family. Post-translationally, methylated by PrmC. Methylation increases the termination efficiency of RF1.

Its subcellular location is the cytoplasm. In terms of biological role, peptide chain release factor 1 directs the termination of translation in response to the peptide chain termination codons UAG and UAA. The polypeptide is Peptide chain release factor 1 (Campylobacter lari (strain RM2100 / D67 / ATCC BAA-1060)).